The chain runs to 409 residues: Multifunctional CCA protein (409 aa).

Residues glycine 8 and arginine 11 each contribute to the ATP site. Residues glycine 8 and arginine 11 each contribute to the CTP site. The Mg(2+) site is built by aspartate 21 and aspartate 23. Residues arginine 91, arginine 137, and arginine 140 each contribute to the ATP site. 3 residues coordinate CTP: arginine 91, arginine 137, and arginine 140. Residues 228-329 enclose the HD domain; sequence TGVHVLSVLE…LELLQSFDVY (102 aa).

This sequence belongs to the tRNA nucleotidyltransferase/poly(A) polymerase family. Bacterial CCA-adding enzyme type 1 subfamily. Monomer. Can also form homodimers and oligomers. The cofactor is Mg(2+). Ni(2+) is required as a cofactor.

It catalyses the reaction a tRNA precursor + 2 CTP + ATP = a tRNA with a 3' CCA end + 3 diphosphate. The enzyme catalyses a tRNA with a 3' CCA end + 2 CTP + ATP = a tRNA with a 3' CCACCA end + 3 diphosphate. In terms of biological role, catalyzes the addition and repair of the essential 3'-terminal CCA sequence in tRNAs without using a nucleic acid template. Adds these three nucleotides in the order of C, C, and A to the tRNA nucleotide-73, using CTP and ATP as substrates and producing inorganic pyrophosphate. tRNA 3'-terminal CCA addition is required both for tRNA processing and repair. Also involved in tRNA surveillance by mediating tandem CCA addition to generate a CCACCA at the 3' terminus of unstable tRNAs. While stable tRNAs receive only 3'-terminal CCA, unstable tRNAs are marked with CCACCA and rapidly degraded. The chain is Multifunctional CCA protein from Pseudomonas savastanoi pv. phaseolicola (strain 1448A / Race 6) (Pseudomonas syringae pv. phaseolicola (strain 1448A / Race 6)).